A 107-amino-acid polypeptide reads, in one-letter code: MNDSEFHRLADNLWQTIEARLDDWDGDSDIDCEINGGVLTLSFENGSKIIINRQEPLHQVWLATKQGGYHFNLKGDDWICDRSGEMFWDLLEQAATQQAGEEISFRG.

It belongs to the frataxin family.

Functionally, involved in iron-sulfur (Fe-S) cluster assembly. May act as a regulator of Fe-S biogenesis. The polypeptide is Iron-sulfur cluster assembly protein CyaY (Enterobacter sp. (strain 638)).